The following is a 517-amino-acid chain: Maturase K (517 aa).

Belongs to the intron maturase 2 family. MatK subfamily.

It localises to the plastid. The protein resides in the chloroplast. In terms of biological role, usually encoded in the trnK tRNA gene intron. Probably assists in splicing its own and other chloroplast group II introns. The chain is Maturase K from Trillium grandiflorum (Large-flowered trillium).